Consider the following 671-residue polypeptide: Preterminal protein (671 aa).

The Nuclear localization signal motif lies at 380 to 389 (RLPVRRRRRR). The disordered stretch occupies residues 386–409 (RRRRVPPPPPPPEEEEEGEALMEE). A compositionally biased stretch (acidic residues) spans 397–409 (PEEEEEGEALMEE). O-(5'-phospho-DNA)-serine is present on S580. The interval 645–671 (GADVPLPPLPAGPEPPLPPGARPRHRF) is disordered. The span at 649–665 (PLPPLPAGPEPPLPPGA) shows a compositional bias: pro residues.

This sequence belongs to the adenoviridae terminal protein family. In terms of assembly, heterodimer with the polymerase; this heterodimer binds to bp 9 to 18 of the genome. Interacts with host POU2F1; POU2F1 binds to the auxiliary sequences in the inverted terminal repeats and tethers the pTP-POL heterodimer to the origin DNA thereby participating in the assembly of the pre-initiation complex (POL-TP-DBP-NFIA-POU2F1). Post-translationally, preterminal protein is used to replicate viral genome, upon genomic encapsidation it is processed first into iTP and finally into TP by adenovirus protease.

The protein resides in the host nucleus matrix. In terms of biological role, protein covalently bound to the viral DNA that acts as a primer for viral genomic replication by DNA strand displacement. Assembles on the viral origin of replication in an initiation complex with viral polymerase, DBP, host NFIA and host POU2F1/OCT1. During initiation, the polymerase covalently couples the first dCTP with Ser-580 of pTP. The terminal protein stimulates the template activity over 20 fold compared to protein-free templates. Neo-synthesized viral genomes are linked to two preterminal proteins, one for each 5' end. These new genomes are encapsidated in the nucleus, and during capsid maturation by viral protease, preterminal protein is first cleaved into intermediary (iTP), then into mature TP. May play a role in host nuclear matrix localization of genomic DNA. The chain is Preterminal protein from Homo sapiens (Human).